The chain runs to 236 residues: Small ribosomal subunit protein eS6 (236 aa).

A phosphoserine mark is found at Ser232 and Ser233.

The protein belongs to the eukaryotic ribosomal protein eS6 family. Phosphorylated.

The protein is Small ribosomal subunit protein eS6 (RPS6) of Kluyveromyces lactis (strain ATCC 8585 / CBS 2359 / DSM 70799 / NBRC 1267 / NRRL Y-1140 / WM37) (Yeast).